Here is a 444-residue protein sequence, read N- to C-terminus: MVGKSTLLSVLASASVAFAACSLDSHCPEETPCCSQYGECGTGAYCLGGCDPRMSFSLESCVPEPVCESASYTFTSMDGITSNTKYLGDASKSNWVYSGSPVIYNDNVLLTMSANSVGTVMASSTYMWYGNVKAKFKTSRGQGVITAFILFSDVKDEIDYEFVGSELTTAQSNYYFQGITNYDNELNITLSDTYANYHEYEIDWTPDEITWLVDGQVGRTKKRADTWNATANQWNFPQTPARVQLSLWPGGLASNGAGTIAWAGGEIDWNSEDIQNNGYYYAAFESVDISCYNAKSAPGTNSGKSYYYNSVLGTNNTVIDSKNATILSSLLATGTNMTAGESAAASGSTAASTAATVPGLTGSGGGGVGDNHSDDGSSSSDSSSGSATSSSSGSSSTGSSGFSQGDGSTSTSKSSADSLVANQERVLKGSLFAGIVAVVAMMAL.

An N-terminal signal peptide occupies residues 1–19 (MVGKSTLLSVLASASVAFA). Cysteine 27 and cysteine 34 are disulfide-bonded. The region spanning 57–271 (SLESCVPEPV…WAGGEIDWNS (215 aa)) is the GH16 domain. Residue glutamate 157 is the Nucleophile of the active site. Glutamate 161 serves as the catalytic Proton donor. Chitin is bound at residue glutamate 161. N-linked (GlcNAc...) asparagine glycosylation is found at asparagine 187 and asparagine 228. Positions 248 and 259 each coordinate chitin. Residues asparagine 315, asparagine 323, asparagine 336, and asparagine 371 are each glycosylated (N-linked (GlcNAc...) asparagine). Serine 415 carries GPI-anchor amidated serine lipidation. The propeptide at 416 to 444 (ADSLVANQERVLKGSLFAGIVAVVAMMAL) is removed in mature form.

This sequence belongs to the glycosyl hydrolase 16 family. CRH1 subfamily. In terms of assembly, forms homodimers as well as heterodimers with other crh protein members crh1 and crh2. Dimerization may be necessary for the transglycosylation activity.

The protein localises to the cell membrane. It catalyses the reaction Random endo-hydrolysis of N-acetyl-beta-D-glucosaminide (1-&gt;4)-beta-linkages in chitin and chitodextrins.. In terms of biological role, dual chitinase/transglycosylase that plays a role in cell wall architecture. Chitinase and transglycosylase activities are coupled. Required for the polysaccharide cross-linking at the septa and the cell wall. More specifically, transfers chitin to 1,6-beta-glucan in the cell wall. The protein is Crh-like protein 3 of Botryotinia fuckeliana (strain B05.10) (Noble rot fungus).